Reading from the N-terminus, the 440-residue chain is Xylose isomerase (440 aa).

Residues His-101 and Asp-104 contribute to the active site. 7 residues coordinate Mg(2+): Glu-232, Glu-268, His-271, Asp-296, Asp-307, Asp-309, and Asp-339.

It belongs to the xylose isomerase family. Homotetramer. Mg(2+) serves as cofactor.

It localises to the cytoplasm. The enzyme catalyses alpha-D-xylose = alpha-D-xylulofuranose. The chain is Xylose isomerase from Salmonella paratyphi B (strain ATCC BAA-1250 / SPB7).